Here is a 423-residue protein sequence, read N- to C-terminus: Imidazolonepropionase (423 aa).

The Fe(3+) site is built by His78 and His80. Residues His78 and His80 each contribute to the Zn(2+) site. 3 residues coordinate 4-imidazolone-5-propanoate: Arg87, Tyr150, and His183. Position 150 (Tyr150) interacts with N-formimidoyl-L-glutamate. His247 is a Fe(3+) binding site. His247 provides a ligand contact to Zn(2+). Glu250 is a 4-imidazolone-5-propanoate binding site. Residue Asp322 coordinates Fe(3+). Asp322 is a Zn(2+) binding site. Asn324 and Gly326 together coordinate N-formimidoyl-L-glutamate. Ser327 provides a ligand contact to 4-imidazolone-5-propanoate.

It belongs to the metallo-dependent hydrolases superfamily. HutI family. Zn(2+) serves as cofactor. Requires Fe(3+) as cofactor.

Its subcellular location is the cytoplasm. The enzyme catalyses 4-imidazolone-5-propanoate + H2O = N-formimidoyl-L-glutamate. Its pathway is amino-acid degradation; L-histidine degradation into L-glutamate; N-formimidoyl-L-glutamate from L-histidine: step 3/3. In terms of biological role, catalyzes the hydrolytic cleavage of the carbon-nitrogen bond in imidazolone-5-propanoate to yield N-formimidoyl-L-glutamate. It is the third step in the universal histidine degradation pathway. This chain is Imidazolonepropionase, found in Bacillus cereus (strain ATCC 10987 / NRS 248).